A 118-amino-acid polypeptide reads, in one-letter code: Large ribosomal subunit protein bL19 (118 aa).

The protein belongs to the bacterial ribosomal protein bL19 family.

In terms of biological role, this protein is located at the 30S-50S ribosomal subunit interface and may play a role in the structure and function of the aminoacyl-tRNA binding site. This Campylobacter concisus (strain 13826) protein is Large ribosomal subunit protein bL19.